An 89-amino-acid polypeptide reads, in one-letter code: Small ribosomal subunit protein uS15 (89 aa).

This sequence belongs to the universal ribosomal protein uS15 family. Part of the 30S ribosomal subunit. Forms a bridge to the 50S subunit in the 70S ribosome, contacting the 23S rRNA.

In terms of biological role, one of the primary rRNA binding proteins, it binds directly to 16S rRNA where it helps nucleate assembly of the platform of the 30S subunit by binding and bridging several RNA helices of the 16S rRNA. Its function is as follows. Forms an intersubunit bridge (bridge B4) with the 23S rRNA of the 50S subunit in the ribosome. This is Small ribosomal subunit protein uS15 from Parvibaculum lavamentivorans (strain DS-1 / DSM 13023 / NCIMB 13966).